The following is a 235-amino-acid chain: tRNA (guanine-N(1)-)-methyltransferase (235 aa).

S-adenosyl-L-methionine contacts are provided by residues Gly-114 and 134 to 139 (IGDYIL).

The protein belongs to the RNA methyltransferase TrmD family. As to quaternary structure, homodimer.

It localises to the cytoplasm. It carries out the reaction guanosine(37) in tRNA + S-adenosyl-L-methionine = N(1)-methylguanosine(37) in tRNA + S-adenosyl-L-homocysteine + H(+). In terms of biological role, specifically methylates guanosine-37 in various tRNAs. This Ehrlichia ruminantium (strain Welgevonden) protein is tRNA (guanine-N(1)-)-methyltransferase.